The sequence spans 222 residues: Exosome complex component Rrp4 (222 aa).

Residues Asn-63–His-131 form the S1 motif domain. One can recognise a KH domain in the interval Glu-139–Ile-200.

Belongs to the RRP4 family. Component of the archaeal exosome complex. Forms a trimer of Rrp4 and/or Csl4 subunits. The trimer associates with a hexameric ring-like arrangement composed of 3 Rrp41-Rrp42 heterodimers.

Its subcellular location is the cytoplasm. Functionally, non-catalytic component of the exosome, which is a complex involved in RNA degradation. Increases the RNA binding and the efficiency of RNA degradation. Confers strong poly(A) specificity to the exosome. This is Exosome complex component Rrp4 from Methanothermus fervidus (strain ATCC 43054 / DSM 2088 / JCM 10308 / V24 S).